The primary structure comprises 250 residues: tRNA (guanine-N(1)-)-methyltransferase (250 aa).

Residues G113 and 133–138 contribute to the S-adenosyl-L-methionine site; that span reads IGDYVL.

Belongs to the RNA methyltransferase TrmD family. As to quaternary structure, homodimer.

The protein localises to the cytoplasm. It catalyses the reaction guanosine(37) in tRNA + S-adenosyl-L-methionine = N(1)-methylguanosine(37) in tRNA + S-adenosyl-L-homocysteine + H(+). Specifically methylates guanosine-37 in various tRNAs. This chain is tRNA (guanine-N(1)-)-methyltransferase, found in Shewanella amazonensis (strain ATCC BAA-1098 / SB2B).